Consider the following 142-residue polypeptide: Large ribosomal subunit protein uL11 (142 aa).

This sequence belongs to the universal ribosomal protein uL11 family. In terms of assembly, part of the ribosomal stalk of the 50S ribosomal subunit. Interacts with L10 and the large rRNA to form the base of the stalk. L10 forms an elongated spine to which L12 dimers bind in a sequential fashion forming a multimeric L10(L12)X complex. In terms of processing, one or more lysine residues are methylated.

Functionally, forms part of the ribosomal stalk which helps the ribosome interact with GTP-bound translation factors. The polypeptide is Large ribosomal subunit protein uL11 (Acidithiobacillus ferrooxidans (strain ATCC 23270 / DSM 14882 / CIP 104768 / NCIMB 8455) (Ferrobacillus ferrooxidans (strain ATCC 23270))).